A 380-amino-acid chain; its full sequence is Cytochrome b (380 aa).

4 helical membrane passes run 34–54 (FGSL…ILAM), 78–100 (WLMR…AHMG), 113–133 (TWNI…MGYV), and 179–199 (FFAF…VHLL). 2 residues coordinate heme b: histidine 84 and histidine 98. Residues histidine 183 and histidine 197 each coordinate heme b. Position 202 (histidine 202) interacts with a ubiquinone. Transmembrane regions (helical) follow at residues 225–245 (FSWK…TITL), 289–309 (LGGV…MLTH), 324–344 (VIFW…AAPV), and 349–369 (ITLG…APMI).

Belongs to the cytochrome b family. In terms of assembly, the main subunits of complex b-c1 are: cytochrome b, cytochrome c1 and the Rieske protein. Heme b serves as cofactor.

The protein resides in the mitochondrion inner membrane. Functionally, component of the ubiquinol-cytochrome c reductase complex (complex III or cytochrome b-c1 complex) that is part of the mitochondrial respiratory chain. The b-c1 complex mediates electron transfer from ubiquinol to cytochrome c. Contributes to the generation of a proton gradient across the mitochondrial membrane that is then used for ATP synthesis. The sequence is that of Cytochrome b (mt:Cyt-b) from Xenoturbella bocki (Marine worm).